Consider the following 367-residue polypeptide: Uroporphyrinogen decarboxylase (367 aa).

N-acetylmethionine is present on methionine 1. Coproporphyrinogen I is bound by residues arginine 37, alanine 39, arginine 41, arginine 50, aspartate 86, tyrosine 164, serine 219, and histidine 339. 3 residues coordinate coproporphyrinogen III: arginine 37, alanine 39, and arginine 41. Aspartate 86, tyrosine 164, serine 219, and histidine 339 together coordinate coproporphyrinogen III.

Belongs to the uroporphyrinogen decarboxylase family. As to quaternary structure, homodimer.

It localises to the cytoplasm. The protein resides in the cytosol. The enzyme catalyses uroporphyrinogen III + 4 H(+) = coproporphyrinogen III + 4 CO2. It catalyses the reaction uroporphyrinogen I + 4 H(+) = coproporphyrinogen I + 4 CO2. Its pathway is porphyrin-containing compound metabolism; protoporphyrin-IX biosynthesis; coproporphyrinogen-III from 5-aminolevulinate: step 4/4. Catalyzes the sequential decarboxylation of the four acetate side chains of uroporphyrinogen to form coproporphyrinogen and participates in the fifth step in the heme biosynthetic pathway. Isomer I or isomer III of uroporphyrinogen may serve as substrate, but only coproporphyrinogen III can ultimately be converted to heme. In vitro also decarboxylates pentacarboxylate porphyrinogen I. This is Uroporphyrinogen decarboxylase from Homo sapiens (Human).